A 219-amino-acid polypeptide reads, in one-letter code: MSDEVVLLDTWASMYGMRARIALAEKGVRYEYKEENLMNRSPLLLQMNPIHKKIPVLIHNGKPICESAIIVQYIDEVWNDKSPLMPSDPYKRSQARFWVDYIDKKIYDTWKKMWLSKGEEHEEGKKELISIFKQLEETLTDKPFYGDDTFGFVDLCLITFSSWFYTYETYGNFKMEEECPKLMAWVKRCMERETVSNTLPDAKKVYGLIVELQKTLESK.

A GST N-terminal domain is found at 3 to 82 (DEVVLLDTWA…YIDEVWNDKS (80 aa)). Glutathione contacts are provided by residues serine 13, isoleucine 54, and 66 to 67 (ES). Positions 88-216 (DPYKRSQARF…GLIVELQKTL (129 aa)) constitute a GST C-terminal domain.

Belongs to the GST superfamily. HSP26 family. In terms of assembly, homodimer. degradation; (R)-lactate from methylglyoxal: step 1/2.

The enzyme catalyses RX + glutathione = an S-substituted glutathione + a halide anion + H(+). In terms of biological role, conjugation of reduced glutathione to a wide number of exogenous and endogenous hydrophobic electrophiles. Involved in the detoxification of certain herbicides. The polypeptide is Glutathione S-transferase 3 (GST3) (Glycine max (Soybean)).